A 509-amino-acid chain; its full sequence is GMP synthase [glutamine-hydrolyzing] (509 aa).

Residues 4–194 form the Glutamine amidotransferase type-1 domain; the sequence is KVIVLDFGGQ…LYEICGLTPD (191 aa). The active-site Nucleophile is Cys81. Active-site residues include His168 and Glu170. Residues 195-384 form the GMPS ATP-PPase domain; sequence WTMESFAQKA…LGLPESIVWR (190 aa). Position 222 to 228 (222 to 228) interacts with ATP; it reads SGGVDSS.

In terms of assembly, homodimer.

The catalysed reaction is XMP + L-glutamine + ATP + H2O = GMP + L-glutamate + AMP + diphosphate + 2 H(+). It participates in purine metabolism; GMP biosynthesis; GMP from XMP (L-Gln route): step 1/1. Functionally, catalyzes the synthesis of GMP from XMP. This Carboxydothermus hydrogenoformans (strain ATCC BAA-161 / DSM 6008 / Z-2901) protein is GMP synthase [glutamine-hydrolyzing].